Consider the following 227-residue polypeptide: Orotidine 5'-phosphate decarboxylase (227 aa).

Substrate-binding positions include D8, K30, 57 to 66, T116, R177, Q186, G206, and R207; that span reads DLKFHDIPNT. K59 serves as the catalytic Proton donor.

It belongs to the OMP decarboxylase family. Type 1 subfamily. In terms of assembly, homodimer.

It carries out the reaction orotidine 5'-phosphate + H(+) = UMP + CO2. The protein operates within pyrimidine metabolism; UMP biosynthesis via de novo pathway; UMP from orotate: step 2/2. Functionally, catalyzes the decarboxylation of orotidine 5'-monophosphate (OMP) to uridine 5'-monophosphate (UMP). This is Orotidine 5'-phosphate decarboxylase from Acinetobacter baumannii (strain AB307-0294).